Reading from the N-terminus, the 147-residue chain is Large ribosomal subunit protein uL13 (147 aa).

Belongs to the universal ribosomal protein uL13 family. In terms of assembly, part of the 50S ribosomal subunit.

Its function is as follows. This protein is one of the early assembly proteins of the 50S ribosomal subunit, although it is not seen to bind rRNA by itself. It is important during the early stages of 50S assembly. This Pseudarthrobacter chlorophenolicus (strain ATCC 700700 / DSM 12829 / CIP 107037 / JCM 12360 / KCTC 9906 / NCIMB 13794 / A6) (Arthrobacter chlorophenolicus) protein is Large ribosomal subunit protein uL13.